The chain runs to 245 residues: Small ribosomal subunit protein uS3 (245 aa).

One can recognise a KH type-2 domain in the interval 39 to 108; the sequence is IRNYIKKNYY…SVFVNVQEVK (70 aa).

It belongs to the universal ribosomal protein uS3 family. As to quaternary structure, part of the 30S ribosomal subunit. Forms a tight complex with proteins S10 and S14.

In terms of biological role, binds the lower part of the 30S subunit head. Binds mRNA in the 70S ribosome, positioning it for translation. The chain is Small ribosomal subunit protein uS3 from Dictyoglomus turgidum (strain DSM 6724 / Z-1310).